Here is a 146-residue protein sequence, read N- to C-terminus: Flagellar assembly factor FliW 1 (146 aa).

The protein belongs to the FliW family. Interacts with translational regulator CsrA and flagellin(s).

The protein resides in the cytoplasm. In terms of biological role, acts as an anti-CsrA protein, binds CsrA and prevents it from repressing translation of its target genes, one of which is flagellin. Binds to flagellin and participates in the assembly of the flagellum. This is Flagellar assembly factor FliW 1 from Helicobacter hepaticus (strain ATCC 51449 / 3B1).